The following is a 634-amino-acid chain: Pescadillo homolog (634 aa).

A BRCT domain is found at 321–414 (RLRTLFKGLK…QLLPTNKYFM (94 aa)). Disordered stretches follow at residues 437–473 (EEKA…EEIE), 491–561 (EYKK…RKAE), and 603–634 (NIDA…LKMA). At Ser-453 the chain carries Phosphoserine. Composition is skewed to acidic residues over residues 454–473 (DDDD…EEIE) and 501–527 (VNED…DVEQ). Coiled-coil stretches lie at residues 460–546 (SDAE…KVES) and 596–629 (LLRK…AAAK). Composition is skewed to basic and acidic residues over residues 528–548 (LDDK…ESGK) and 603–623 (NIDA…KKAA). Residues 624–634 (AEAAAKALKMA) show a composition bias toward low complexity.

This sequence belongs to the pescadillo family.

The protein localises to the nucleus. The protein resides in the nucleolus. It localises to the nucleoplasm. Functionally, required for maturation of ribosomal RNAs and formation of the large ribosomal subunit. The polypeptide is Pescadillo homolog (Drosophila willistoni (Fruit fly)).